We begin with the raw amino-acid sequence, 368 residues long: Phospho-N-acetylmuramoyl-pentapeptide-transferase (368 aa).

9 consecutive transmembrane segments (helical) span residues 30 to 50, 72 to 92, 99 to 119, 135 to 155, 170 to 190, 201 to 221, 238 to 258, 265 to 286, and 345 to 365; these read AAAI…IAYL, LPTM…FLWA, VWLV…DDYL, LIGQ…DPSM, LTIN…TAIS, GLAA…AYLA, GGEV…FLWF, IIMG…ALLI, and KIVI…LMTL.

This sequence belongs to the glycosyltransferase 4 family. MraY subfamily. The cofactor is Mg(2+).

The protein localises to the cell inner membrane. It carries out the reaction UDP-N-acetyl-alpha-D-muramoyl-L-alanyl-gamma-D-glutamyl-meso-2,6-diaminopimeloyl-D-alanyl-D-alanine + di-trans,octa-cis-undecaprenyl phosphate = di-trans,octa-cis-undecaprenyl diphospho-N-acetyl-alpha-D-muramoyl-L-alanyl-D-glutamyl-meso-2,6-diaminopimeloyl-D-alanyl-D-alanine + UMP. Its pathway is cell wall biogenesis; peptidoglycan biosynthesis. Its function is as follows. Catalyzes the initial step of the lipid cycle reactions in the biosynthesis of the cell wall peptidoglycan: transfers peptidoglycan precursor phospho-MurNAc-pentapeptide from UDP-MurNAc-pentapeptide onto the lipid carrier undecaprenyl phosphate, yielding undecaprenyl-pyrophosphoryl-MurNAc-pentapeptide, known as lipid I. The polypeptide is Phospho-N-acetylmuramoyl-pentapeptide-transferase (Chlorobium chlorochromatii (strain CaD3)).